The primary structure comprises 197 residues: Imidazoleglycerol-phosphate dehydratase (197 aa).

Belongs to the imidazoleglycerol-phosphate dehydratase family.

The protein localises to the cytoplasm. It carries out the reaction D-erythro-1-(imidazol-4-yl)glycerol 3-phosphate = 3-(imidazol-4-yl)-2-oxopropyl phosphate + H2O. The protein operates within amino-acid biosynthesis; L-histidine biosynthesis; L-histidine from 5-phospho-alpha-D-ribose 1-diphosphate: step 6/9. The sequence is that of Imidazoleglycerol-phosphate dehydratase from Streptomyces avermitilis (strain ATCC 31267 / DSM 46492 / JCM 5070 / NBRC 14893 / NCIMB 12804 / NRRL 8165 / MA-4680).